The primary structure comprises 431 residues: Chaperone SurA (431 aa).

Residues Met1 to Ala22 form the signal peptide. PpiC domains lie at Ala173–Asp274 and Thr283–Asp383.

It is found in the periplasm. The catalysed reaction is [protein]-peptidylproline (omega=180) = [protein]-peptidylproline (omega=0). Chaperone involved in the correct folding and assembly of outer membrane proteins. Recognizes specific patterns of aromatic residues and the orientation of their side chains, which are found more frequently in integral outer membrane proteins. May act in both early periplasmic and late outer membrane-associated steps of protein maturation. The protein is Chaperone SurA of Pseudoalteromonas translucida (strain TAC 125).